A 372-amino-acid chain; its full sequence is NAD(P)H-quinone oxidoreductase subunit 1 (372 aa).

The next 9 membrane-spanning stretches (helical) occupy residues 27–47, 65–85, 97–117, 128–148, 166–186, 204–224, 266–286, 308–328, and 347–367; these read AIWM…GVLV, PEYI…KLVF, WLFT…YLIV, VGTG…GLLM, AAQS…IVMM, ILGW…IAAL, ILSA…PIPI, ALGI…AILL, and FLLP…LAFP.

This sequence belongs to the complex I subunit 1 family. NDH-1 is composed of at least 11 different subunits.

It is found in the cellular thylakoid membrane. It catalyses the reaction a plastoquinone + NADH + (n+1) H(+)(in) = a plastoquinol + NAD(+) + n H(+)(out). The catalysed reaction is a plastoquinone + NADPH + (n+1) H(+)(in) = a plastoquinol + NADP(+) + n H(+)(out). Functionally, NDH-1 shuttles electrons from an unknown electron donor, via FMN and iron-sulfur (Fe-S) centers, to quinones in the respiratory and/or the photosynthetic chain. The immediate electron acceptor for the enzyme in this species is believed to be plastoquinone. Couples the redox reaction to proton translocation, and thus conserves the redox energy in a proton gradient. The protein is NAD(P)H-quinone oxidoreductase subunit 1 of Nostoc sp. (strain PCC 7120 / SAG 25.82 / UTEX 2576).